Here is a 193-residue protein sequence, read N- to C-terminus: RNA polymerase sigma-H factor (193 aa).

The Polymerase core binding signature appears at 49–62 (DVAQEAFIKAYRAL). The H-T-H motif DNA-binding region spans 157–176 (YEDIATVMQCPVGTVRSRIF).

The protein belongs to the sigma-70 factor family. ECF subfamily.

Its function is as follows. Sigma factors are initiation factors that promote the attachment of RNA polymerase to specific initiation sites and are then released. This sigma factor regulates genes such as algD, involved in alginate biosynthesis. The chain is RNA polymerase sigma-H factor (algU) from Pseudomonas aeruginosa (strain ATCC 15692 / DSM 22644 / CIP 104116 / JCM 14847 / LMG 12228 / 1C / PRS 101 / PAO1).